The sequence spans 599 residues: Sulfite reductase [NADPH] flavoprotein alpha-component (599 aa).

The Flavodoxin-like domain occupies 63-201 (ITVISASQTG…LATAWRKQVV (139 aa)). FMN contacts are provided by residues 69 to 74 (SQTGNA), 116 to 119 (STQG), and 152 to 161 (LGDTSYENFC). Residues 234–448 (EQPLTAQLAV…IEHNDNFRLP (215 aa)) enclose the FAD-binding FR-type domain. FAD is bound by residues T322, H356, 386-389 (RLYS), 404-406 (TVG), Y410, and 419-422 (GGAS). NADP(+) contacts are provided by residues 519–520 (SR), 525–529 (KVYVQ), and D561. Residue Y599 participates in FAD binding.

This sequence belongs to the NADPH-dependent sulphite reductase flavoprotein subunit CysJ family. It in the N-terminal section; belongs to the flavodoxin family. The protein in the C-terminal section; belongs to the flavoprotein pyridine nucleotide cytochrome reductase family. In terms of assembly, alpha(8)-beta(8). The alpha component is a flavoprotein, the beta component is a hemoprotein. FAD is required as a cofactor. Requires FMN as cofactor.

The catalysed reaction is hydrogen sulfide + 3 NADP(+) + 3 H2O = sulfite + 3 NADPH + 4 H(+). The protein operates within sulfur metabolism; hydrogen sulfide biosynthesis; hydrogen sulfide from sulfite (NADPH route): step 1/1. Its function is as follows. Component of the sulfite reductase complex that catalyzes the 6-electron reduction of sulfite to sulfide. This is one of several activities required for the biosynthesis of L-cysteine from sulfate. The flavoprotein component catalyzes the electron flow from NADPH -&gt; FAD -&gt; FMN to the hemoprotein component. The polypeptide is Sulfite reductase [NADPH] flavoprotein alpha-component (Serratia proteamaculans (strain 568)).